The chain runs to 35 residues: Mu-theraphotoxin-Pm1a (35 aa).

Cystine bridges form between C3-C17, C10-C22, and C16-C29. Phenylalanine amide is present on F35.

Belongs to the neurotoxin 10 (Hwtx-1) family. 62 (Vatx) subfamily. Expressed by the venom gland.

It is found in the secreted. Functionally, gating-modifier toxin with weak activity on Nav1.7/SCN9A and Nav1.8/SCN10A. Inhibits Nav1.7/SCN9A peak current (IC(50)=334 nM) and shifts the voltage dependence of activation to more depolarised membrane potentials. Shows 21% peak current inhibition (at 10 uM) on Nav1.8/SCN10A sodium channels. In Poecilotheria metallica (Metallic blue ornamental tree spider), this protein is Mu-theraphotoxin-Pm1a.